A 1127-amino-acid chain; its full sequence is Caprin-2 (1127 aa).

A disordered region spans residues 67–108; that stretch reads YQSPSGHSEEEREGNMKSAKPQVNHSQHGESQRALSPLQSTL. Polar residues predominate over residues 99–108; sequence RALSPLQSTL. Coiled coils occupy residues 129–156 and 194–216; these read LKHK…GEHL and AQKK…KLRT. 3 disordered regions span residues 382–614, 642–753, and 922–975; these read NKQG…KDPV, DKPS…SSSV, and QCYK…PVDV. Composition is skewed to basic and acidic residues over residues 402–432 and 440–464; these read KRWD…HQEV and EQRK…EISK. Composition is skewed to polar residues over residues 512-531 and 544-567; these read PKSW…SWTT and TPKS…QISP. A compositionally biased stretch (basic and acidic residues) spans 588 to 597; it reads LNTEPKDVPK. Polar residues-rich tracts occupy residues 665-714 and 741-753; these read KEQN…TSET and QGFQ…SSSV. Serine 948 and serine 949 each carry phosphoserine. A compositionally biased stretch (polar residues) spans 956-970; the sequence is TFNSGDSGQGDSRSM. A C1q domain is found at 993-1127; that stretch reads PQQMRVAFSA…TFSGYLLYQD (135 aa). Positions 1078 and 1084 each coordinate Ca(2+).

It belongs to the caprin family. In terms of assembly, homotrimer; via C1q domain. Found in a complex with LRP6, CCNY and CDK14 during G2/M stage; CAPRIN2 functions as a scaffold for the complex by binding to CCNY via its N terminus and to CDK14 via its C terminus. Interacts with LRP5. Interacts with LRP6. As to expression, detected in all tissues tested with highest levels of expression in brain and spleen.

The protein resides in the cytoplasm. It is found in the mitochondrion. It localises to the cell membrane. Promotes phosphorylation of the Wnt coreceptor LRP6, leading to increased activity of the canonical Wnt signaling pathway. Facilitates constitutive LRP6 phosphorylation by CDK14/CCNY during G2/M stage of the cell cycle, which may potentiate cells for Wnt signaling. May regulate the transport and translation of mRNAs, modulating for instance the expression of proteins involved in synaptic plasticity in neurons. Involved in regulation of growth as erythroblasts shift from a highly proliferative state towards their terminal phase of differentiation. May be involved in apoptosis. The protein is Caprin-2 of Homo sapiens (Human).